We begin with the raw amino-acid sequence, 192 residues long: Putative acetyltransferase YjbC (192 aa).

Residues 1-139 (MNWYEKLSEY…MEILYWSPKT (139 aa)) form the N-acetyltransferase domain.

Its subcellular location is the cytoplasm. The polypeptide is Putative acetyltransferase YjbC (yjbC) (Bacillus subtilis (strain 168)).